The sequence spans 550 residues: Hydroxylamine reductase (550 aa).

The [2Fe-2S] cluster site is built by Cys-3, Cys-6, Cys-18, and Cys-25. Positions 249, 273, 317, 405, 433, 458, 492, and 494 each coordinate hybrid [4Fe-2O-2S] cluster. Cys-405 bears the Cysteine persulfide mark.

The protein belongs to the HCP family. Requires [2Fe-2S] cluster as cofactor. It depends on hybrid [4Fe-2O-2S] cluster as a cofactor.

The protein localises to the cytoplasm. The catalysed reaction is A + NH4(+) + H2O = hydroxylamine + AH2 + H(+). Functionally, catalyzes the reduction of hydroxylamine to form NH(3) and H(2)O. This is Hydroxylamine reductase from Shigella boydii serotype 18 (strain CDC 3083-94 / BS512).